The primary structure comprises 546 residues: Probable protein kinase UbiB (546 aa).

The Protein kinase domain maps to 124–502; the sequence is DFDIKPLASA…HVRQGQSRYL (379 aa). ATP-binding positions include 130–138 and Lys-153; that span reads LASASIAQV. Asp-288 acts as the Proton acceptor in catalysis. 2 helical membrane-spanning segments follow: residues 501–521 and 522–542; these read YLLG…VSRP and EWGL…FVGW.

Belongs to the ABC1 family. UbiB subfamily.

It is found in the cell inner membrane. Its pathway is cofactor biosynthesis; ubiquinone biosynthesis [regulation]. Its function is as follows. Is probably a protein kinase regulator of UbiI activity which is involved in aerobic coenzyme Q (ubiquinone) biosynthesis. The protein is Probable protein kinase UbiB of Escherichia fergusonii (strain ATCC 35469 / DSM 13698 / CCUG 18766 / IAM 14443 / JCM 21226 / LMG 7866 / NBRC 102419 / NCTC 12128 / CDC 0568-73).